The chain runs to 235 residues: Motile sperm domain-containing protein 3 (235 aa).

Disordered regions lie at residues 1 to 30 (MRRGAPQDQELVGPGAPGRGSRGAPPPSGP) and 143 to 170 (ELQGQSDPTPHPEPHSWTASSTAQPFPE). Positions 33 to 145 (PVLVFPPDLV…RAPAYPLELQ (113 aa)) constitute an MSP domain. 2 helical membrane passes run 180 to 200 (SFLLFLLMGTVSVAFLLLPLQ) and 213 to 233 (VSLGQKLVAAYVLGLLTMVFL).

Its subcellular location is the membrane. This chain is Motile sperm domain-containing protein 3 (MOSPD3), found in Bos taurus (Bovine).